The chain runs to 280 residues: Ribosomal RNA small subunit methyltransferase A (280 aa).

Positions 13, 15, 40, 61, 85, and 105 each coordinate S-adenosyl-L-methionine.

Belongs to the class I-like SAM-binding methyltransferase superfamily. rRNA adenine N(6)-methyltransferase family. RsmA subfamily.

It localises to the cytoplasm. The catalysed reaction is adenosine(1518)/adenosine(1519) in 16S rRNA + 4 S-adenosyl-L-methionine = N(6)-dimethyladenosine(1518)/N(6)-dimethyladenosine(1519) in 16S rRNA + 4 S-adenosyl-L-homocysteine + 4 H(+). Specifically dimethylates two adjacent adenosines (A1518 and A1519) in the loop of a conserved hairpin near the 3'-end of 16S rRNA in the 30S particle. May play a critical role in biogenesis of 30S subunits. The protein is Ribosomal RNA small subunit methyltransferase A of Phocaeicola vulgatus (strain ATCC 8482 / DSM 1447 / JCM 5826 / CCUG 4940 / NBRC 14291 / NCTC 11154) (Bacteroides vulgatus).